Here is a 375-residue protein sequence, read N- to C-terminus: Trichodiene synthase (375 aa).

This sequence belongs to the trichodiene synthase family.

The catalysed reaction is (2E,6E)-farnesyl diphosphate = trichodiene + diphosphate. It functions in the pathway sesquiterpene biosynthesis; trichothecene biosynthesis. Functionally, TS is a member of the terpene cyclase group of enzymes. It catalyzes the isomerization and cyclization of farnesyl pyro-phosphate to form trichodiene, the first cyclic intermediate in the biosynthetic pathway for trichothecenes. It serves to branch trichothecene biosynthesis from the isoprenoid pathway. The chain is Trichodiene synthase (TRI5) from Fusarium acaciae-mearnsii.